Consider the following 385-residue polypeptide: Tetraacyldisaccharide 4'-kinase (385 aa).

60 to 67 (TVGGSGKT) contacts ATP.

This sequence belongs to the LpxK family.

It carries out the reaction a lipid A disaccharide + ATP = a lipid IVA + ADP + H(+). It functions in the pathway glycolipid biosynthesis; lipid IV(A) biosynthesis; lipid IV(A) from (3R)-3-hydroxytetradecanoyl-[acyl-carrier-protein] and UDP-N-acetyl-alpha-D-glucosamine: step 6/6. Transfers the gamma-phosphate of ATP to the 4'-position of a tetraacyldisaccharide 1-phosphate intermediate (termed DS-1-P) to form tetraacyldisaccharide 1,4'-bis-phosphate (lipid IVA). The protein is Tetraacyldisaccharide 4'-kinase of Psychrobacter arcticus (strain DSM 17307 / VKM B-2377 / 273-4).